A 67-amino-acid polypeptide reads, in one-letter code: Large ribosomal subunit protein bL32 (67 aa).

The segment covering 1-20 (MAVPKRKMSRSNTRARRAKW) has biased composition (basic residues). Residues 1 to 24 (MAVPKRKMSRSNTRARRAKWKATA) are disordered.

The protein belongs to the bacterial ribosomal protein bL32 family.

The sequence is that of Large ribosomal subunit protein bL32 from Renibacterium salmoninarum (strain ATCC 33209 / DSM 20767 / JCM 11484 / NBRC 15589 / NCIMB 2235).